We begin with the raw amino-acid sequence, 379 residues long: Cobalt-precorrin-5B C(1)-methyltransferase (379 aa).

Belongs to the CbiD family.

It carries out the reaction Co-precorrin-5B + S-adenosyl-L-methionine = Co-precorrin-6A + S-adenosyl-L-homocysteine. The protein operates within cofactor biosynthesis; adenosylcobalamin biosynthesis; cob(II)yrinate a,c-diamide from sirohydrochlorin (anaerobic route): step 6/10. Functionally, catalyzes the methylation of C-1 in cobalt-precorrin-5B to form cobalt-precorrin-6A. This chain is Cobalt-precorrin-5B C(1)-methyltransferase, found in Salmonella paratyphi B (strain ATCC BAA-1250 / SPB7).